The chain runs to 41 residues: Photosystem II reaction center protein L (41 aa).

The chain crosses the membrane as a helical span at residues 20-40; that stretch reads SLYLGLLLVFVVGLLFSSYFL.

The protein belongs to the PsbL family. As to quaternary structure, PSII is composed of 1 copy each of membrane proteins PsbA, PsbB, PsbC, PsbD, PsbE, PsbF, PsbH, PsbI, PsbJ, PsbK, PsbL, PsbM, PsbT, PsbX, PsbY, PsbZ, Psb30/Ycf12, peripheral proteins PsbO, CyanoQ (PsbQ), PsbU, PsbV and a large number of cofactors. It forms dimeric complexes.

The protein resides in the cellular thylakoid membrane. Its function is as follows. One of the components of the core complex of photosystem II (PSII). PSII is a light-driven water:plastoquinone oxidoreductase that uses light energy to abstract electrons from H(2)O, generating O(2) and a proton gradient subsequently used for ATP formation. It consists of a core antenna complex that captures photons, and an electron transfer chain that converts photonic excitation into a charge separation. This subunit is found at the monomer-monomer interface and is required for correct PSII assembly and/or dimerization. The polypeptide is Photosystem II reaction center protein L (Synechococcus sp. (strain JA-2-3B'a(2-13)) (Cyanobacteria bacterium Yellowstone B-Prime)).